The following is a 413-amino-acid chain: Phosphopentomutase (413 aa).

Mn(2+) contacts are provided by aspartate 11, aspartate 306, histidine 311, aspartate 347, histidine 348, and histidine 359.

Belongs to the phosphopentomutase family. It depends on Mn(2+) as a cofactor.

The protein localises to the cytoplasm. The catalysed reaction is 2-deoxy-alpha-D-ribose 1-phosphate = 2-deoxy-D-ribose 5-phosphate. It carries out the reaction alpha-D-ribose 1-phosphate = D-ribose 5-phosphate. It participates in carbohydrate degradation; 2-deoxy-D-ribose 1-phosphate degradation; D-glyceraldehyde 3-phosphate and acetaldehyde from 2-deoxy-alpha-D-ribose 1-phosphate: step 1/2. Its function is as follows. Isomerase that catalyzes the conversion of deoxy-ribose 1-phosphate (dRib-1-P) and ribose 1-phosphate (Rib-1-P) to deoxy-ribose 5-phosphate (dRib-5-P) and ribose 5-phosphate (Rib-5-P), respectively. This is Phosphopentomutase from Helicobacter pylori (strain P12).